Consider the following 119-residue polypeptide: UPF0145 protein Ta0182 (119 aa).

This sequence belongs to the UPF0145 family.

The chain is UPF0145 protein Ta0182 from Thermoplasma acidophilum (strain ATCC 25905 / DSM 1728 / JCM 9062 / NBRC 15155 / AMRC-C165).